Consider the following 214-residue polypeptide: MSVSKLNKMQFSDKMSNLALARVTRKCKEVANASDITEAGIHVEIKENNLMDIKGFIKGPEGTPYAGGTFEIKVDIPEHYPFEPPKAKFVTRIWHPNISSQTGTICLDILKDKWTASLTLRTVLLSLQAMLCSPEPSDPQDAVVAKQFINNYPMFTATAVYWTSYFANSKKDVEPDFNRKVGRLIEMGIRETEAIVYLSCNNWKLEQALQFIFD.

The region spanning 21–168 (ARVTRKCKEV…AVYWTSYFAN (148 aa)) is the UBC core domain. Cys106 (glycyl thioester intermediate) is an active-site residue. The UBA domain occupies 172–214 (DVEPDFNRKVGRLIEMGIRETEAIVYLSCNNWKLEQALQFIFD).

Belongs to the ubiquitin-conjugating enzyme family.

The enzyme catalyses S-ubiquitinyl-[E1 ubiquitin-activating enzyme]-L-cysteine + [E2 ubiquitin-conjugating enzyme]-L-cysteine = [E1 ubiquitin-activating enzyme]-L-cysteine + S-ubiquitinyl-[E2 ubiquitin-conjugating enzyme]-L-cysteine.. It functions in the pathway protein modification; protein ubiquitination. Functionally, acts with E3 ubiquitin-protein ligase trim-21 to catalyze the 'Lys-48'-linked polyubiquitination of ced-1, promoting its proteasomal degradation to maintain appropriate ced-1 levels for apoptotic cell clearance. The chain is Ubiquitin-conjugating enzyme E2 21 (ubc-21) from Caenorhabditis elegans.